The chain runs to 370 residues: tRNA-specific 2-thiouridylase MnmA (370 aa).

Residues 9–16 (GISGGVDS) and Met35 contribute to the ATP site. An interaction with target base in tRNA region spans residues 107 to 109 (NPD). Cys112 acts as the Nucleophile in catalysis. A disulfide bridge connects residues Cys112 and Cys209. Gly137 lines the ATP pocket. An interaction with tRNA region spans residues 159–161 (KDQ). Residue Cys209 is the Cysteine persulfide intermediate of the active site.

It belongs to the MnmA/TRMU family.

It localises to the cytoplasm. The catalysed reaction is S-sulfanyl-L-cysteinyl-[protein] + uridine(34) in tRNA + AH2 + ATP = 2-thiouridine(34) in tRNA + L-cysteinyl-[protein] + A + AMP + diphosphate + H(+). Catalyzes the 2-thiolation of uridine at the wobble position (U34) of tRNA, leading to the formation of s(2)U34. This is tRNA-specific 2-thiouridylase MnmA from Mycoplasma pneumoniae (strain ATCC 29342 / M129 / Subtype 1) (Mycoplasmoides pneumoniae).